A 429-amino-acid polypeptide reads, in one-letter code: 3-phosphoshikimate 1-carboxyvinyltransferase (429 aa).

Residues K23, S24, and R28 each coordinate 3-phosphoshikimate. Position 23 (K23) interacts with phosphoenolpyruvate. 2 residues coordinate phosphoenolpyruvate: G95 and R123. Residues S168, Q170, D316, and K343 each coordinate 3-phosphoshikimate. Phosphoenolpyruvate is bound at residue Q170. D316 acts as the Proton acceptor in catalysis. 2 residues coordinate phosphoenolpyruvate: R347 and R389.

Belongs to the EPSP synthase family. In terms of assembly, monomer.

The protein localises to the cytoplasm. It carries out the reaction 3-phosphoshikimate + phosphoenolpyruvate = 5-O-(1-carboxyvinyl)-3-phosphoshikimate + phosphate. It functions in the pathway metabolic intermediate biosynthesis; chorismate biosynthesis; chorismate from D-erythrose 4-phosphate and phosphoenolpyruvate: step 6/7. Catalyzes the transfer of the enolpyruvyl moiety of phosphoenolpyruvate (PEP) to the 5-hydroxyl of shikimate-3-phosphate (S3P) to produce enolpyruvyl shikimate-3-phosphate and inorganic phosphate. In Bacillus thuringiensis (strain Al Hakam), this protein is 3-phosphoshikimate 1-carboxyvinyltransferase.